The primary structure comprises 847 residues: B-cell receptor CD22 (847 aa).

A signal peptide spans 1–19 (MHLLGPWLLLLVLEYLAFS). In terms of domain architecture, Ig-like V-type spans 20-138 (DSSKWAFEHP…MERIHLNVSE (119 aa)). Residues 20–687 (DSSKWAFEHP…YYSPETIGRR (668 aa)) are Extracellular-facing. Asn-67, Asn-101, and Asn-112 each carry an N-linked (GlcNAc...) asparagine glycan. N-acetylneuraminate is bound at residue Arg-120. 3 N-linked (GlcNAc...) asparagine glycosylation sites follow: Asn-135, Asn-164, and Asn-231. Ig-like C2-type domains lie at 143–235 (PHIQ…DTVQ), 242–326 (PKLE…VFLQ), 331–416 (PEPS…LDVQ), 419–500 (PKKV…VALN), 505–582 (PRDV…QTAS), and 593–676 (PRRL…STLT). Cys-161 and Cys-219 are disulfide-bonded. Disulfide bonds link Cys-265–Cys-309 and Cys-353–Cys-396. Residues Asn-363, Asn-428, Asn-445, Asn-448, and Asn-479 are each glycosylated (N-linked (GlcNAc...) asparagine). Disulfide bonds link Cys-442-Cys-484 and Cys-529-Cys-571. Residues Asn-574 and Asn-634 are each glycosylated (N-linked (GlcNAc...) asparagine). The cysteines at positions 616 and 659 are disulfide-linked. Residues 688–708 (VAVGFGSCLAILILAICGLKL) form a helical membrane-spanning segment. Topologically, residues 709–847 (QRRWKRTQSQ…ENVDYVILKH (139 aa)) are cytoplasmic. Ser-725, Ser-726, and Ser-729 each carry phosphoserine. 2 consecutive short sequence motifs (ITIM motif) follow at residues 760–765 (ISYTTL) and 794–799 (VTYSVL). Tyr-762 carries the phosphotyrosine modification. Phosphotyrosine occurs at positions 807, 822, and 842. 2 short sequence motifs (ITIM motif) span residues 820–825 (IHYSEL) and 840–845 (VDYVIL).

The protein belongs to the immunoglobulin superfamily. SIGLEC (sialic acid binding Ig-like lectin) family. As to quaternary structure, predominantly monomer of isoform CD22-beta. Also found as heterodimer of isoform CD22-beta and a shorter isoform. Interacts with PTPN6/SHP-1, LYN, SYK, PIK3R1/PIK3R2 and PLCG1 upon phosphorylation. Interacts with GRB2, INPP5D and SHC1 upon phosphorylation. May form a complex with INPP5D/SHIP, GRB2 and SHC1. Post-translationally, phosphorylation of Tyr-762, Tyr-807 and Tyr-822 are involved in binding to SYK, GRB2 and SYK, respectively. Phosphorylation of Tyr-842 is involved in binding to SYK, PLCG2 and PIK3R1/PIK3R2. Phosphorylated on tyrosine residues by LYN.

It is found in the cell membrane. Most highly expressed siglec (sialic acid-binding immunoglobulin-like lectin) on B-cells that plays a role in various aspects of B-cell biology including differentiation, antigen presentation, and trafficking to bone marrow. Binds to alpha 2,6-linked sialic acid residues of surface molecules such as CD22 itself, CD45 and IgM in a cis configuration. Can also bind to ligands on other cells as an adhesion molecule in a trans configuration. Acts as an inhibitory coreceptor on the surface of B-cells and inhibits B-cell receptor induced signaling, characterized by inhibition of the calcium mobilization and cellular activation. Mechanistically, the immunoreceptor tyrosine-based inhibitory motif domain is phosphorylated by the Src kinase LYN, which in turn leads to the recruitment of the protein tyrosine phosphatase 1/PTPN6, leading to the negative regulation of BCR signaling. If this negative signaling from is of sufficient strength, apoptosis of the B-cell can be induced. The sequence is that of B-cell receptor CD22 from Pan troglodytes (Chimpanzee).